The sequence spans 319 residues: Meiotic drive suppressor wtf16 (319 aa).

2 disordered regions span residues 1-22 and 35-68; these read MKNN…KTGH and DSEE…RSTD. A run of 6 helical transmembrane segments spans residues 73 to 93, 110 to 130, 153 to 173, 187 to 207, 215 to 235, and 241 to 261; these read FLIK…LAIC, WTLF…LTYF, VVII…CIKF, CSIS…FWTL, FQVL…MYLF, and ATGY…FFFY.

Belongs to the WTF family. In terms of assembly, homomer. Interacts with other proteins that exhibit high sequence similarity.

It localises to the spore membrane. The protein localises to the vacuole membrane. Functionally, acts as a suppressor component of the dual wtf meiotic drive system, and can suppress but not confer meiotic drive by compatible poisons. Wtf meiotic drive systems promote unequal transmission of alleles from the parental zygote to progeny spores by encoding a poison and an antidote from the same locus; the poison is trans-acting and forms toxic aggregates in all spores within an ascus, wherease the antidote is spore-specific and targets aggregates for degradation by the vacuole. Meiotic drive by wtf systems therefore lead to poisoning of all progeny that do not inherit the dual poison/antidote allele, or express a compatible antidote. The chain is Meiotic drive suppressor wtf16 from Schizosaccharomyces pombe (strain 972 / ATCC 24843) (Fission yeast).